Consider the following 584-residue polypeptide: A-type ATP synthase subunit A (584 aa).

An ATP-binding site is contributed by 233–240 (GPFGSGKT).

The protein belongs to the ATPase alpha/beta chains family. In terms of assembly, has multiple subunits with at least A(3), B(3), C, D, E, F, H, I and proteolipid K(x).

It is found in the cell membrane. The catalysed reaction is ATP + H2O + 4 H(+)(in) = ADP + phosphate + 5 H(+)(out). Its function is as follows. Component of the A-type ATP synthase that produces ATP from ADP in the presence of a proton gradient across the membrane. The A chain is the catalytic subunit. The polypeptide is A-type ATP synthase subunit A (Methanobrevibacter smithii (strain ATCC 35061 / DSM 861 / OCM 144 / PS)).